A 317-amino-acid chain; its full sequence is Beta-ketoacyl-[acyl-carrier-protein] synthase III (317 aa).

Catalysis depends on residues cysteine 112 and histidine 244. The ACP-binding stretch occupies residues 245–249 (QANLR). Asparagine 274 is a catalytic residue.

It belongs to the thiolase-like superfamily. FabH family. In terms of assembly, homodimer.

It localises to the cytoplasm. It catalyses the reaction malonyl-[ACP] + acetyl-CoA + H(+) = 3-oxobutanoyl-[ACP] + CO2 + CoA. It functions in the pathway lipid metabolism; fatty acid biosynthesis. In terms of biological role, catalyzes the condensation reaction of fatty acid synthesis by the addition to an acyl acceptor of two carbons from malonyl-ACP. Catalyzes the first condensation reaction which initiates fatty acid synthesis and may therefore play a role in governing the total rate of fatty acid production. Possesses both acetoacetyl-ACP synthase and acetyl transacylase activities. Its substrate specificity determines the biosynthesis of branched-chain and/or straight-chain of fatty acids. In Shigella dysenteriae serotype 1 (strain Sd197), this protein is Beta-ketoacyl-[acyl-carrier-protein] synthase III.